A 716-amino-acid chain; its full sequence is Translation initiation factor IF-2 (716 aa).

Positions Gly-53–Glu-135 are disordered. Polar residues predominate over residues Val-57 to Asn-83. Residues Val-93–Lys-109 show a composition bias toward low complexity. Residues Ile-217–Lys-386 form the tr-type G domain. The tract at residues Gly-226–Thr-233 is G1. Gly-226 to Thr-233 is a GTP binding site. The interval Gly-251 to His-255 is G2. Residues Asp-272–Gly-275 are G3. GTP contacts are provided by residues Asp-272–His-276 and Asn-326–Asp-329. A G4 region spans residues Asn-326 to Asp-329. A G5 region spans residues Ser-362 to Leu-364.

It belongs to the TRAFAC class translation factor GTPase superfamily. Classic translation factor GTPase family. IF-2 subfamily.

Its subcellular location is the cytoplasm. Its function is as follows. One of the essential components for the initiation of protein synthesis. Protects formylmethionyl-tRNA from spontaneous hydrolysis and promotes its binding to the 30S ribosomal subunits. Also involved in the hydrolysis of GTP during the formation of the 70S ribosomal complex. This Bacillus velezensis (strain DSM 23117 / BGSC 10A6 / LMG 26770 / FZB42) (Bacillus amyloliquefaciens subsp. plantarum) protein is Translation initiation factor IF-2.